The primary structure comprises 398 residues: MIWANGANSDRLEFSTSKEVTVAPTFEDMHLKESLLRGIYAYGYESPSAVQSRAIVQICKGRDTIAQAQSGTGKTATFSIGILQVIDTVVRETQALVLSPTRELATQIQSVIMALGDYMNVQCHACIGGTNIGEDIRKLDYGQHVVSGTPGRVADMIRRRHLRTRHIKMLVLDEADELLNRGFREQIYDVYRYLPPATQVVVVSATLPYDVLDMTTKFMTDPVRVLVKRDELTLEGIKQYFIAVEKEEWKFDTLCDLYDTLTITQAVIFCNTRRKVDWLTDKMREANFTVSSMHGEMPQKERDSIMQDFRQGNSRVLISTDVWARGIDVQQVSLVINYDLPTNRENYIHRIGRSGRFGRKGVAINFVTSDDVRILRDIELYYSTQIDEMPMNVADLLS.

Residues 24–52 (PTFEDMHLKESLLRGIYAYGYESPSAVQS) carry the Q motif motif. The Helicase ATP-binding domain maps to 55-225 (IVQICKGRDT…TKFMTDPVRV (171 aa)). Residue 68 to 75 (AQSGTGKT) participates in ATP binding. The DEAD box motif lies at 173-176 (DEAD). One can recognise a Helicase C-terminal domain in the interval 236–397 (GIKQYFIAVE…EMPMNVADLL (162 aa)).

The protein belongs to the DEAD box helicase family. DDX48/FAL1 subfamily.

It localises to the nucleus. The protein resides in the nucleolus. It carries out the reaction ATP + H2O = ADP + phosphate + H(+). In terms of biological role, ATP-dependent RNA helicase involved in 40S ribosomal subunit biogenesis. Required for the processing and cleavage of 35S pre-rRNA at sites A0, A1, and A2, leading to mature 18S rRNA. This is ATP-dependent RNA helicase fal1 (fal1) from Aspergillus fumigatus (strain ATCC MYA-4609 / CBS 101355 / FGSC A1100 / Af293) (Neosartorya fumigata).